Reading from the N-terminus, the 819-residue chain is Ferric-pyoverdine 358 receptor (819 aa).

The signal sequence occupies residues 1–47 (MSKPLPSALNPLAKALLIRHSLRPRHALSRIGMGLALSSALVFQVQA). The short motif at 115 to 122 (NTVTVTAS) is the TonB box element. The TBDR plug domain maps to 166–276 (SIRETPQTIT…PSAVVNVIRK (111 aa)). In terms of domain architecture, TBDR beta-barrel spans 281–819 (EFKSHIQAGV…NATVTLRYDF (539 aa)). Residues 802-819 (YGHYGAPRNATVTLRYDF) carry the TonB C-terminal box motif.

Belongs to the TonB-dependent receptor family.

The protein localises to the cell outer membrane. Functionally, specific receptor for the siderophore ferric pyoverdine (pseudobactin) 358. In Pseudomonas putida (Arthrobacter siderocapsulatus), this protein is Ferric-pyoverdine 358 receptor (pupA).